Reading from the N-terminus, the 265-residue chain is MLVPMSEGDTSELDHDADHLAEGDERYLLRNKRQIRGLLQQLIDQRAVVTMHVAGRDMAVPTAVLEVDEDDDYVILDGSHNDASNRAIEQAKYLLCYAQLERVNIRFRLETPERLERDIHVAFRATLPDSLYHLQRRESYRLETPITDSPTCTIRQDAASGGNLNLQLRVIDISSGGLAVSLATGMPLLEPQHTYRDCTLQLPDSAPIALPLTVCSQYKMTLPNGSEGFRVGMQFSDLPRGADETIQRYIFRVDRQRNARKSGVF.

Residues 135 to 252 (QRRESYRLET…DETIQRYIFR (118 aa)) form the PilZ domain.

This sequence belongs to the YcgR family. In terms of assembly, monomer. Interacts with the flagellar basal bodies.

The protein localises to the bacterial flagellum basal body. Acts as a flagellar brake, regulating swimming and swarming in a bis-(3'-5') cyclic diguanylic acid (c-di-GMP)-dependent manner. Binds 1 c-di-GMP dimer per subunit. Increasing levels of c-di-GMP lead to decreased motility. This Xanthomonas campestris pv. campestris (strain B100) protein is Flagellar brake protein YcgR.